A 355-amino-acid chain; its full sequence is Elongation factor Ts (355 aa).

The involved in Mg(2+) ion dislocation from EF-Tu stretch occupies residues 82-85; the sequence is TDFV.

Belongs to the EF-Ts family.

The protein localises to the cytoplasm. Associates with the EF-Tu.GDP complex and induces the exchange of GDP to GTP. It remains bound to the aminoacyl-tRNA.EF-Tu.GTP complex up to the GTP hydrolysis stage on the ribosome. In Helicobacter pylori (strain G27), this protein is Elongation factor Ts.